The chain runs to 447 residues: ATP-dependent protease ATPase subunit HslU (447 aa).

Residues I18, 60 to 65, D259, E325, and R397 each bind ATP; that span reads GVGKTE.

Belongs to the ClpX chaperone family. HslU subfamily. A double ring-shaped homohexamer of HslV is capped on each side by a ring-shaped HslU homohexamer. The assembly of the HslU/HslV complex is dependent on binding of ATP.

It is found in the cytoplasm. In terms of biological role, ATPase subunit of a proteasome-like degradation complex; this subunit has chaperone activity. The binding of ATP and its subsequent hydrolysis by HslU are essential for unfolding of protein substrates subsequently hydrolyzed by HslV. HslU recognizes the N-terminal part of its protein substrates and unfolds these before they are guided to HslV for hydrolysis. This is ATP-dependent protease ATPase subunit HslU from Burkholderia pseudomallei (strain 668).